The sequence spans 488 residues: Catalase (488 aa).

Positions 1 to 26 are disordered; that stretch reads MTDRKNLTTNQGVPVGDNQNSMTAGR. Residues 7-23 show a composition bias toward polar residues; it reads LTTNQGVPVGDNQNSMT. Active-site residues include His-55 and Asn-128. Tyr-338 provides a ligand contact to heme.

It belongs to the catalase family. Heme is required as a cofactor.

The protein localises to the cytoplasm. The enzyme catalyses 2 H2O2 = O2 + 2 H2O. In terms of biological role, decomposes hydrogen peroxide into water and oxygen; serves to protect cells from the toxic effects of hydrogen peroxide. The protein is Catalase (kat) of Listeria monocytogenes serovar 1/2a (strain ATCC BAA-679 / EGD-e).